A 141-amino-acid polypeptide reads, in one-letter code: Nucleoside diphosphate kinase (141 aa).

ATP contacts are provided by lysine 11, phenylalanine 59, arginine 87, threonine 93, arginine 104, and asparagine 114. Catalysis depends on histidine 117, which acts as the Pros-phosphohistidine intermediate.

The protein belongs to the NDK family. In terms of assembly, homotetramer. Requires Mg(2+) as cofactor.

The protein localises to the cytoplasm. It carries out the reaction a 2'-deoxyribonucleoside 5'-diphosphate + ATP = a 2'-deoxyribonucleoside 5'-triphosphate + ADP. The catalysed reaction is a ribonucleoside 5'-diphosphate + ATP = a ribonucleoside 5'-triphosphate + ADP. Its function is as follows. Major role in the synthesis of nucleoside triphosphates other than ATP. The ATP gamma phosphate is transferred to the NDP beta phosphate via a ping-pong mechanism, using a phosphorylated active-site intermediate. The sequence is that of Nucleoside diphosphate kinase from Albidiferax ferrireducens (strain ATCC BAA-621 / DSM 15236 / T118) (Rhodoferax ferrireducens).